Reading from the N-terminus, the 279-residue chain is NADPH-dependent 7-cyano-7-deazaguanine reductase (279 aa).

A substrate-binding site is contributed by Ile-86 to Ser-88. Ser-88 to Lys-89 contributes to the NADPH binding site. The active-site Thioimide intermediate is Cys-187. Asp-194 serves as the catalytic Proton donor. His-226–Glu-227 serves as a coordination point for substrate. Arg-255–Gly-256 is an NADPH binding site.

This sequence belongs to the GTP cyclohydrolase I family. QueF type 2 subfamily. Homodimer.

It localises to the cytoplasm. It carries out the reaction 7-aminomethyl-7-carbaguanine + 2 NADP(+) = 7-cyano-7-deazaguanine + 2 NADPH + 3 H(+). It participates in tRNA modification; tRNA-queuosine biosynthesis. Catalyzes the NADPH-dependent reduction of 7-cyano-7-deazaguanine (preQ0) to 7-aminomethyl-7-deazaguanine (preQ1). The chain is NADPH-dependent 7-cyano-7-deazaguanine reductase from Pasteurella multocida (strain Pm70).